A 329-amino-acid polypeptide reads, in one-letter code: Ig gamma-2 chain C region (329 aa).

Disulfide bonds link Cys28-Cys79, Cys142-Cys202, and Cys248-Cys308. Asn178 carries N-linked (GlcNAc...) asparagine glycosylation.

The protein resides in the secreted. The sequence is that of Ig gamma-2 chain C region from Cavia porcellus (Guinea pig).